Here is a 1905-residue protein sequence, read N- to C-terminus: Microtubule cross-linking factor 1 (1905 aa).

Residues 1–249 (METLNGPAGG…SSDREPPRGA (249 aa)) form a necessary for colocalization and binding with microtubules region. The interval 1-329 (METLNGPAGG…SLGEQSRLVP (329 aa)) is disordered. The tract at residues 1–508 (METLNGPAGG…QDDSADLRCQ (508 aa)) is necessary for self-assembly, microtubule bundling activity and apicobasal microtubule organization. Over residues 22 to 40 (QHHRHHHLHPVAERRRLHR) the composition is skewed to basic residues. Low complexity-rich tracts occupy residues 63–95 (VPSS…AAPG) and 115–130 (AGAR…LGSR). Serine 77 and serine 87 each carry phosphoserine. Residues serine 217, serine 221, and serine 263 each carry the phosphoserine modification. Over residues 268 to 283 (ALLAAPLAAGACPGGR) the composition is skewed to low complexity. Coiled coils occupy residues 330-404 (AAEE…EQKS), 432-483 (SVRL…SSLK), and 513-718 (KEEA…LQHE). Disordered stretches follow at residues 544 to 563 (YGDV…PSTR), 601 to 631 (DMRG…LESS), 671 to 694 (FEPP…GAPL), 737 to 800 (LRAP…SEPC), and 842 to 867 (AGLR…GDQQ). Serine 549 carries the phosphoserine modification. The span at 601 to 616 (DMRGQQEREGPGRDHA) shows a compositional bias: basic and acidic residues. Serine 618 is modified (phosphoserine). Threonine 621 carries the post-translational modification Phosphothreonine. The segment covering 680 to 692 (LGEGASPGAGGGA) has biased composition (gly residues). At serine 685 the chain carries Phosphoserine. Basic and acidic residues predominate over residues 741 to 770 (SPRDSDAESDAGKKESDGEESRLPQPKREG). Serine 776 carries the phosphoserine modification. Residues 857–866 (GEEEQGEGDQ) are compositionally biased toward acidic residues. Serine 901, serine 923, lysine 941, and threonine 975 each carry phosphoserine. Residues 1080–1100 (GVQGGHQADGPDHDSDRGCGF) are disordered. 2 coiled-coil regions span residues 1143 to 1201 (KALL…ELGS) and 1238 to 1278 (EKNW…KENS). The interval 1265 to 1382 (EFLWRIEQLQ…EENHKGNLQR (118 aa)) is necessary for interaction with MARK2 and apicobasal microtubule bundle formation in polarized epithelial cells. Phosphoserine is present on serine 1278. The tract at residues 1346-1384 (ALSLDDEPEEPPAHRPEREFRNRLPEEEENHKGNLQRAV) is disordered. Residues 1356 to 1377 (PPAHRPEREFRNRLPEEEENHK) show a composition bias toward basic and acidic residues. Residues serine 1385, serine 1388, and serine 1399 each carry the phosphoserine modification. Threonine 1417 carries the post-translational modification Phosphothreonine. The residue at position 1421 (serine 1421) is a Phosphoserine. Position 1427 is a phosphotyrosine (tyrosine 1427). Residues 1485 to 1505 (DTMTSPEHCQKQPLRSHVLTE) form a disordered region. Phosphoserine occurs at positions 1514, 1523, 1561, 1578, 1583, 1592, and 1661. A disordered region spans residues 1524–1569 (ITAAGGEGPFPTSRARGSPGDTKGGPPEPMLSRWPCTSPRHSRDYV). Disordered regions lie at residues 1655 to 1689 (GSGV…SRQV), 1707 to 1756 (PKYG…PVHT), 1782 to 1842 (GLRA…APPG), and 1863 to 1905 (KEER…PWGL). Phosphothreonine is present on residues threonine 1667 and threonine 1675. Over residues 1678-1687 (SSPSRSLRSR) the composition is skewed to low complexity. The segment at 1678-1773 (SSPSRSLRSR…SLFNIIDHSP (96 aa)) is necessary for colocalization and binding with microtubules. A phosphoserine mark is found at serine 1679 and serine 1683. Over residues 1744-1756 (ARSTTTRESPVHT) the composition is skewed to polar residues. Phosphoserine is present on residues serine 1791, serine 1808, serine 1812, and serine 1814.

This sequence belongs to the SOGA family. Homodimer. Associates (via N- and C-terminus domains) with microtubule filaments. In terms of assembly, interacts with MARK2; the interaction is direct. Post-translationally, phosphorylated during mitosis in a CDK1-dependent manner.

The protein localises to the lateral cell membrane. It localises to the apical cell membrane. The protein resides in the cytoplasm. It is found in the cytoskeleton. Its subcellular location is the spindle pole. The protein localises to the midbody. Functionally, microtubule-associated factor involved in the late phase of epithelial polarization and microtubule dynamics regulation. Plays a role in the development and maintenance of non-centrosomal microtubule bundles at the lateral membrane in polarized epithelial cells. Required for faithful chromosome segregation during mitosis. This chain is Microtubule cross-linking factor 1 (MTCL1), found in Homo sapiens (Human).